A 155-amino-acid polypeptide reads, in one-letter code: Small ribosomal subunit protein uS7cz/uS7cy (155 aa).

The protein belongs to the universal ribosomal protein uS7 family. Part of the 30S ribosomal subunit.

It localises to the plastid. The protein localises to the chloroplast. One of the primary rRNA binding proteins, it binds directly to 16S rRNA where it nucleates assembly of the head domain of the 30S subunit. This chain is Small ribosomal subunit protein uS7cz/uS7cy (rps7-A), found in Oenothera argillicola (Appalachian evening primrose).